The sequence spans 298 residues: Protease HtpX (298 aa).

2 helical membrane-spanning segments follow: residues isoleucine 4 to leucine 24 and threonine 41 to isoleucine 61. Histidine 147 contacts Zn(2+). The active site involves glutamate 148. Histidine 151 contacts Zn(2+). 2 consecutive transmembrane segments (helical) span residues leucine 162 to isoleucine 182 and glycine 193 to alanine 213. Residue glutamate 225 coordinates Zn(2+).

Belongs to the peptidase M48B family. Zn(2+) is required as a cofactor.

The protein localises to the cell inner membrane. The protein is Protease HtpX of Alcanivorax borkumensis (strain ATCC 700651 / DSM 11573 / NCIMB 13689 / SK2).